A 1394-amino-acid polypeptide reads, in one-letter code: DNA-directed RNA polymerase subunit beta' (1394 aa).

Zn(2+) is bound by residues Cys-70, Cys-72, Cys-85, and Cys-88. Residues Asp-470, Asp-472, and Asp-474 each coordinate Mg(2+). Cys-815, Cys-889, Cys-896, and Cys-899 together coordinate Zn(2+).

It belongs to the RNA polymerase beta' chain family. The RNAP catalytic core consists of 2 alpha, 1 beta, 1 beta' and 1 omega subunit. When a sigma factor is associated with the core the holoenzyme is formed, which can initiate transcription. Requires Mg(2+) as cofactor. It depends on Zn(2+) as a cofactor.

The catalysed reaction is RNA(n) + a ribonucleoside 5'-triphosphate = RNA(n+1) + diphosphate. In terms of biological role, DNA-dependent RNA polymerase catalyzes the transcription of DNA into RNA using the four ribonucleoside triphosphates as substrates. The polypeptide is DNA-directed RNA polymerase subunit beta' (Anaeromyxobacter dehalogenans (strain 2CP-C)).